We begin with the raw amino-acid sequence, 399 residues long: Dual-specificity RNA methyltransferase RlmN (399 aa).

Glutamate 122 acts as the Proton acceptor in catalysis. The 244-residue stretch at glutamate 128–leucine 371 folds into the Radical SAM core domain. A disulfide bridge connects residues cysteine 135 and cysteine 374. Residues cysteine 142, cysteine 146, and cysteine 149 each contribute to the [4Fe-4S] cluster site. Residues glycine 200–glutamate 201, serine 232, serine 254–histidine 256, and asparagine 331 each bind S-adenosyl-L-methionine. Cysteine 374 functions as the S-methylcysteine intermediate in the catalytic mechanism.

It belongs to the radical SAM superfamily. RlmN family. It depends on [4Fe-4S] cluster as a cofactor.

The protein localises to the cytoplasm. The enzyme catalyses adenosine(2503) in 23S rRNA + 2 reduced [2Fe-2S]-[ferredoxin] + 2 S-adenosyl-L-methionine = 2-methyladenosine(2503) in 23S rRNA + 5'-deoxyadenosine + L-methionine + 2 oxidized [2Fe-2S]-[ferredoxin] + S-adenosyl-L-homocysteine. It carries out the reaction adenosine(37) in tRNA + 2 reduced [2Fe-2S]-[ferredoxin] + 2 S-adenosyl-L-methionine = 2-methyladenosine(37) in tRNA + 5'-deoxyadenosine + L-methionine + 2 oxidized [2Fe-2S]-[ferredoxin] + S-adenosyl-L-homocysteine. Specifically methylates position 2 of adenine 2503 in 23S rRNA and position 2 of adenine 37 in tRNAs. m2A2503 modification seems to play a crucial role in the proofreading step occurring at the peptidyl transferase center and thus would serve to optimize ribosomal fidelity. This chain is Dual-specificity RNA methyltransferase RlmN, found in Rhodopseudomonas palustris (strain BisB18).